We begin with the raw amino-acid sequence, 103 residues long: Large ribosomal subunit protein bL21 (103 aa).

It belongs to the bacterial ribosomal protein bL21 family. As to quaternary structure, part of the 50S ribosomal subunit. Contacts protein L20.

This protein binds to 23S rRNA in the presence of protein L20. This Yersinia pseudotuberculosis serotype O:1b (strain IP 31758) protein is Large ribosomal subunit protein bL21.